Reading from the N-terminus, the 81-residue chain is Delta-actitoxin-Aeq2d (81 aa).

The N-terminal stretch at 1 to 19 is a signal peptide; that stretch reads MNRLMILVFAAVILALASA. Positions 20-25 are excised as a propeptide; it reads DDVDIA. Disulfide bonds link Cys31/Cys78, Cys33/Cys68, and Cys61/Cys79.

The protein belongs to the sea anemone sodium channel inhibitory toxin family. Type I subfamily.

The protein resides in the secreted. It localises to the nematocyst. In terms of biological role, binds specifically to voltage-gated sodium channels (Nav), thereby delaying their inactivation during signal transduction. Causes death to crabs. The protein is Delta-actitoxin-Aeq2d of Actinia equina (Beadlet anemone).